The primary structure comprises 196 residues: Transcriptional regulatory protein UhpA (196 aa).

Positions 3-116 constitute a Response regulatory domain; that stretch reads TVALIDDHLI…ELIAAVHTVA (114 aa). A 4-aspartylphosphate modification is found at aspartate 54. In terms of domain architecture, HTH luxR-type spans 131–196; it reads ASGRQDPLTK…ELARRMFDGW (66 aa). A DNA-binding region (H-T-H motif) is located at residues 155 to 174; that stretch reads VKEIAAELGLSPKTVHVHRA.

Post-translationally, phosphorylated and dephosphorylated by UhpB.

The protein localises to the cytoplasm. Its activity is regulated as follows. Phosphorylation by UhpB enhances DNA binding activity. Part of the UhpABC signaling cascade that controls the expression of the hexose phosphate transporter UhpT. Activates the transcription of the uhpT gene. Acts by binding specifically to the uhpT promoter region. This Escherichia coli (strain K12) protein is Transcriptional regulatory protein UhpA (uhpA).